Consider the following 382-residue polypeptide: Type 2 DNA topoisomerase 6 subunit A (382 aa).

The region spanning 14 to 155 is the Topo IIA-type catalytic domain; sequence YDPQKVLKKL…MHITADRRGY (142 aa). The active-site O-(5'-phospho-DNA)-tyrosine intermediate is the Tyr-108. Positions 202 and 254 each coordinate Mg(2+).

Belongs to the TOP6A family. In terms of assembly, homodimer. Heterotetramer of two Top6A and two Top6B chains. Mg(2+) is required as a cofactor.

The catalysed reaction is ATP-dependent breakage, passage and rejoining of double-stranded DNA.. Its function is as follows. Relaxes both positive and negative superturns and exhibits a strong decatenase activity. This chain is Type 2 DNA topoisomerase 6 subunit A, found in Pyrococcus abyssi (strain GE5 / Orsay).